Consider the following 284-residue polypeptide: D-tagatose-1,6-bisphosphate aldolase subunit GatY (284 aa).

D82 functions as the Proton donor in the catalytic mechanism. Residues H83 and H180 each contribute to the Zn(2+) site. G181 serves as a coordination point for dihydroxyacetone phosphate. Residue H208 participates in Zn(2+) binding. Dihydroxyacetone phosphate is bound by residues 209-211 (GAS) and 230-233 (NVAT).

Belongs to the class II fructose-bisphosphate aldolase family. TagBP aldolase GatY subfamily. In terms of assembly, forms a complex with GatZ. Zn(2+) serves as cofactor.

The catalysed reaction is D-tagatofuranose 1,6-bisphosphate = D-glyceraldehyde 3-phosphate + dihydroxyacetone phosphate. It functions in the pathway carbohydrate metabolism; D-tagatose 6-phosphate degradation; D-glyceraldehyde 3-phosphate and glycerone phosphate from D-tagatose 6-phosphate: step 2/2. Functionally, catalytic subunit of the tagatose-1,6-bisphosphate aldolase GatYZ, which catalyzes the reversible aldol condensation of dihydroxyacetone phosphate (DHAP or glycerone-phosphate) with glyceraldehyde 3-phosphate (G3P) to produce tagatose 1,6-bisphosphate (TBP). Requires GatZ subunit for full activity and stability. Is involved in the catabolism of galactitol. This is D-tagatose-1,6-bisphosphate aldolase subunit GatY from Escherichia coli O17:K52:H18 (strain UMN026 / ExPEC).